Reading from the N-terminus, the 125-residue chain is Multifunctional methyltransferase subunit TRM112-like protein (125 aa).

The TRM112 domain maps to 2 to 119 (KLLTHNLLSS…SRGIPNMLLN (118 aa)).

It belongs to the TRM112 family. In terms of assembly, part of the heterodimeric BUD23-TRM112 methyltransferase complex; this heterodimerization is necessary for the metabolic stability and activity of the catalytic subunit BUD23. Part of the heterodimeric N6AMT1-TRM112 methyltransferase complex; this heterodimerization is necessary for S-adenosyl-L-methionine-binding to N6AMT1/HEMK2. Part of the heterodimeric ALKBH8-TRM112 methyltransferase complex. Part of the heterodimeric METTL5-TRM112 methyltransferase complex; this heterodimerization is necessary for the stability of the catalytic subunit METTL5. Part of the heterodimeric THUMPD3-TRM112 methyltransferase complex; this complex forms an active tRNA methyltransferase, where TRMT112 acts as an activator of the catalytic subunit THUMPD3. Part of the heterodimeric THUMPD2-TRM112 methyltransferase complex; this complex forms an active tRNA methyltransferase, where TRMT112 acts as an activator of the catalytic subunit THUMPD2. Part of the heterodimeric TRMT11-TRM112 methyltransferase complex; this complex forms an active tRNA methyltransferase, where TRMT112 acts as an activator of the catalytic subunit TRMT11. Abundantly expressed in the testis, also expressed in the brain, heart, kidney, liver, lung, muscle and spleen.

The protein resides in the nucleus. Its subcellular location is the nucleoplasm. It localises to the cytoplasm. The protein localises to the perinuclear region. Acts as an activator of both rRNA/tRNA and protein methyltransferases. Together with methyltransferase BUD23, methylates the N(7) position of a guanine in 18S rRNA. The heterodimer with HEMK2/N6AMT1 catalyzes N5-methylation of ETF1 on 'Gln-185', using S-adenosyl L-methionine as methyl donor. The heterodimer with ALKBH8 catalyzes the methylation of 5-carboxymethyl uridine to 5-methylcarboxymethyl uridine at the wobble position of the anticodon loop in target tRNA species. Together with methyltransferase THUMPD3, catalyzes the formation of N(2)-methylguanosine at position 6 in a broad range of tRNA substrates and at position 7 of tRNA(Trp). Involved in the pre-rRNA processing steps leading to small-subunit rRNA production. Together with methyltransferase METTL5, specifically methylates the 6th position of adenine in position 1832 of 18S rRNA. The protein is Multifunctional methyltransferase subunit TRM112-like protein (Trmt112) of Mus musculus (Mouse).